We begin with the raw amino-acid sequence, 262 residues long: Acyl-[acyl-carrier-protein]--UDP-N-acetylglucosamine O-acyltransferase (262 aa).

Belongs to the transferase hexapeptide repeat family. LpxA subfamily. In terms of assembly, homotrimer.

The protein resides in the cytoplasm. The catalysed reaction is a (3R)-hydroxyacyl-[ACP] + UDP-N-acetyl-alpha-D-glucosamine = a UDP-3-O-[(3R)-3-hydroxyacyl]-N-acetyl-alpha-D-glucosamine + holo-[ACP]. It participates in glycolipid biosynthesis; lipid IV(A) biosynthesis; lipid IV(A) from (3R)-3-hydroxytetradecanoyl-[acyl-carrier-protein] and UDP-N-acetyl-alpha-D-glucosamine: step 1/6. Functionally, involved in the biosynthesis of lipid A, a phosphorylated glycolipid that anchors the lipopolysaccharide to the outer membrane of the cell. This Burkholderia ambifaria (strain MC40-6) protein is Acyl-[acyl-carrier-protein]--UDP-N-acetylglucosamine O-acyltransferase.